The sequence spans 258 residues: Venom plasminogen activator GPV-PA (258 aa).

The first 18 residues, 1 to 18, serve as a signal peptide directing secretion; sequence MVLIRVLANLLILQLSYA. A propeptide spanning residues 19-24 is cleaved from the precursor; sequence QKSSEL. The Peptidase S1 domain occupies 25–249; the sequence is VFGGRPCNIN…YTDWIQSIIA (225 aa). 6 disulfide bridges follow: C31–C163, C50–C66, C98–C256, C142–C210, C174–C189, and C200–C225. N44 carries an N-linked (GlcNAc...) asparagine glycan. Residues H65 and D110 each act as charge relay system in the active site. N121 and N185 each carry an N-linked (GlcNAc...) asparagine glycan. Residue S204 is the Charge relay system of the active site.

This sequence belongs to the peptidase S1 family. Snake venom subfamily. In terms of assembly, monomer. Expressed by the venom gland.

It is found in the secreted. Its function is as follows. Snake venom serine protease that activates plasminogen. In Trimeresurus albolabris (White-lipped pit viper), this protein is Venom plasminogen activator GPV-PA.